The following is a 374-amino-acid chain: Ribosomal RNA large subunit methyltransferase M (374 aa).

S-adenosyl-L-methionine is bound by residues serine 188, 221-224 (CPGG), aspartate 240, aspartate 260, and aspartate 276. The active-site Proton acceptor is the lysine 305.

Belongs to the class I-like SAM-binding methyltransferase superfamily. RNA methyltransferase RlmE family. RlmM subfamily. Monomer.

It localises to the cytoplasm. The enzyme catalyses cytidine(2498) in 23S rRNA + S-adenosyl-L-methionine = 2'-O-methylcytidine(2498) in 23S rRNA + S-adenosyl-L-homocysteine + H(+). Catalyzes the 2'-O-methylation at nucleotide C2498 in 23S rRNA. The protein is Ribosomal RNA large subunit methyltransferase M of Edwardsiella ictaluri (strain 93-146).